Reading from the N-terminus, the 217-residue chain is Flagellar L-ring protein 1 (217 aa).

The first 16 residues, 1–16, serve as a signal peptide directing secretion; it reads MTLARLAPLAALLLAA. Cys-17 carries N-palmitoyl cysteine lipidation. Cys-17 carries S-diacylglycerol cysteine lipidation.

The protein belongs to the FlgH family. As to quaternary structure, the basal body constitutes a major portion of the flagellar organelle and consists of four rings (L,P,S, and M) mounted on a central rod.

It is found in the cell outer membrane. The protein resides in the bacterial flagellum basal body. Assembles around the rod to form the L-ring and probably protects the motor/basal body from shearing forces during rotation. This chain is Flagellar L-ring protein 1, found in Chromobacterium violaceum (strain ATCC 12472 / DSM 30191 / JCM 1249 / CCUG 213 / NBRC 12614 / NCIMB 9131 / NCTC 9757 / MK).